A 644-amino-acid chain; its full sequence is DNA gyrase subunit B (644 aa).

The Toprim domain maps to 429–543 (CEIFLVEGDS…AGYVYIAQPP (115 aa)). Glutamate 435, aspartate 508, and aspartate 510 together coordinate Mg(2+).

This sequence belongs to the type II topoisomerase GyrB family. Heterotetramer, composed of two GyrA and two GyrB chains. In the heterotetramer, GyrA contains the active site tyrosine that forms a transient covalent intermediate with DNA, while GyrB binds cofactors and catalyzes ATP hydrolysis. Mg(2+) serves as cofactor. It depends on Mn(2+) as a cofactor. Ca(2+) is required as a cofactor.

Its subcellular location is the cytoplasm. It carries out the reaction ATP-dependent breakage, passage and rejoining of double-stranded DNA.. Its function is as follows. A type II topoisomerase that negatively supercoils closed circular double-stranded (ds) DNA in an ATP-dependent manner to modulate DNA topology and maintain chromosomes in an underwound state. Negative supercoiling favors strand separation, and DNA replication, transcription, recombination and repair, all of which involve strand separation. Also able to catalyze the interconversion of other topological isomers of dsDNA rings, including catenanes and knotted rings. Type II topoisomerases break and join 2 DNA strands simultaneously in an ATP-dependent manner. The protein is DNA gyrase subunit B of Staphylococcus aureus (strain Mu50 / ATCC 700699).